The following is a 307-amino-acid chain: MLILNVNHMNITQGMGVAELIEEMGRSGVLGAGRVHRATKLLRGMIDDLEMAIFMSVAGPLVPGGMRRIIRDLIDDGTISALITSGANLTHDLLEAFGGAHYRDYGFDDEKLHQEGIGRIGDVYTRSEDFEVFESENQEIFSSIFSAKPHISIQELIHEIGGHLDDDMSIIRTAHLRGVPIYAPGLIDSMLGLQLWMYTQDNRICLDAVKDMHSLSDLVFSHERIGAIILGGGLPKHYTLASTLLRGGVDAAVQITMDRSETGSLSGAPLEEAKSWAKAQAGSNLVTVVGDATALFPVILAGALSEL.

The active-site Nucleophile is Lys278.

The protein belongs to the deoxyhypusine synthase family. It depends on NAD(+) as a cofactor.

It carries out the reaction [eIF5A protein]-L-lysine + spermidine = [eIF5A protein]-deoxyhypusine + propane-1,3-diamine. Its pathway is protein modification; eIF5A hypusination. Functionally, catalyzes the NAD-dependent oxidative cleavage of spermidine and the subsequent transfer of the butylamine moiety of spermidine to the epsilon-amino group of a specific lysine residue of the eIF-5A precursor protein to form the intermediate deoxyhypusine residue. The protein is Probable deoxyhypusine synthase (dys) of Methanothermobacter thermautotrophicus (strain ATCC 29096 / DSM 1053 / JCM 10044 / NBRC 100330 / Delta H) (Methanobacterium thermoautotrophicum).